The chain runs to 273 residues: uncharacterized protein (273 aa).

Residues 7–25 traverse the membrane as a helical segment; the sequence is FFRWAFLIATVYVAYYFLV. Disordered stretches follow at residues 34 to 154 and 168 to 273; these read KPQK…LKMK and LHNS…DSLW. The segment covering 36-54 has biased composition (basic residues); the sequence is QKSKLTKLGKQKQRQKQKN. A compositionally biased stretch (basic and acidic residues) spans 55 to 91; it reads TKKDTLVNRETPSKKSQKLETSDALKSKSKDSSKKEP. Positions 92-101 are enriched in low complexity; it reads VVVPKKGTPK. Positions 115–144 are enriched in basic and acidic residues; sequence PKKEKLVGKNPAEKEDTTDVEDTQKLEQKH. Residues 145-154 are compositionally biased toward polar residues; the sequence is STTPSSLKMK. The segment covering 201–212 has biased composition (basic residues); it reads KRQRQNQQKKLR. Positions 213-240 are enriched in basic and acidic residues; sequence AKEMQELADEEQRRRLAAHRKELHEANR. Residues 245-266 are compositionally biased toward polar residues; that stretch reads LNNSSRSAYSYINNGQAGSSKG.

It is found in the cytoplasm. Its subcellular location is the membrane. This is an uncharacterized protein from Schizosaccharomyces pombe (strain 972 / ATCC 24843) (Fission yeast).